Consider the following 229-residue polypeptide: uncharacterized protein (229 aa).

Positions 1–26 (MSRNDARYLRCTAALGAAFFACGAAA) are cleaved as a signal peptide.

Belongs to the OmpW/AlkL family.

The protein resides in the cell outer membrane. This is an uncharacterized protein from Sinorhizobium fredii (strain NBRC 101917 / NGR234).